A 604-amino-acid polypeptide reads, in one-letter code: Rhotekin-2 (604 aa).

Residues Met-1–Asn-74 enclose the REM-1 domain. Residues Val-53–Arg-79 adopt a coiled-coil conformation. Residues Ala-281 to Phe-387 form the PH domain. Residues Leu-481 to Ile-590 are disordered. The span at Gly-514–Gly-527 shows a compositional bias: polar residues. Residues Ser-529–Pro-543 show a composition bias toward low complexity.

Its function is as follows. May play an important role in lymphopoiesis. The protein is Rhotekin-2 (Rtkn2) of Mus musculus (Mouse).